A 150-amino-acid polypeptide reads, in one-letter code: Transcriptional regulator MraZ (150 aa).

2 SpoVT-AbrB domains span residues 5 to 52 (VTHL…PLPD) and 81 to 124 (AHDL…DAEA).

Belongs to the MraZ family. In terms of assembly, forms oligomers.

It is found in the cytoplasm. It localises to the nucleoid. This is Transcriptional regulator MraZ from Alkalilimnicola ehrlichii (strain ATCC BAA-1101 / DSM 17681 / MLHE-1).